Consider the following 383-residue polypeptide: Na(+)/H(+) antiporter NhaA (383 aa).

The next 11 helical transmembrane spans lie at 10–30 (LIGG…NNSP), 56–76 (LMHW…GLEI), 91–111 (IITP…IYLS), 121–141 (GWAI…ALLG), 150–170 (LLVI…IAIF), 174–194 (SLSL…IICN), 206–226 (VVLG…ATLA), 254–274 (PWII…ISFS), 289–308 (IIWG…LAVF), 327–347 (GISL…VLAF), and 355–375 (AIKI…YIVL).

The protein belongs to the NhaA Na(+)/H(+) (TC 2.A.33) antiporter family.

It localises to the cell inner membrane. The enzyme catalyses Na(+)(in) + 2 H(+)(out) = Na(+)(out) + 2 H(+)(in). In terms of biological role, na(+)/H(+) antiporter that extrudes sodium in exchange for external protons. This Francisella tularensis subsp. holarctica (strain FTNF002-00 / FTA) protein is Na(+)/H(+) antiporter NhaA.